A 545-amino-acid chain; its full sequence is Chaperonin GroEL (545 aa).

ATP is bound by residues 29–32 (TMGP), K50, 86–90 (DGTTT), G414, 480–482 (NAA), and D496.

The protein belongs to the chaperonin (HSP60) family. In terms of assembly, forms a cylinder of 14 subunits composed of two heptameric rings stacked back-to-back. Interacts with the co-chaperonin GroES.

It localises to the cytoplasm. The catalysed reaction is ATP + H2O + a folded polypeptide = ADP + phosphate + an unfolded polypeptide.. Its function is as follows. Together with its co-chaperonin GroES, plays an essential role in assisting protein folding. The GroEL-GroES system forms a nano-cage that allows encapsulation of the non-native substrate proteins and provides a physical environment optimized to promote and accelerate protein folding. This Malacoplasma penetrans (strain HF-2) (Mycoplasma penetrans) protein is Chaperonin GroEL.